Here is a 217-residue protein sequence, read N- to C-terminus: CLA biosynthesis enone reductase (217 aa).

Arg-20, Ser-22, and Arg-24 together coordinate FMN. Cys-51 provides a ligand contact to 10-oxooctadecanoate. Positions 78 and 81 each coordinate FMN. Arg-118 serves as a coordination point for 10-oxooctadecanoate. FMN-binding residues include Asn-165, Ser-168, Gly-169, and Arg-206.

The protein belongs to the nitroreductase family. Homodimer. It depends on FMN as a cofactor.

The catalysed reaction is 10-oxo-(11E)-octadecenoate + NADH + H(+) = 10-oxooctadecanoate + NAD(+). It participates in lipid metabolism; fatty acid metabolism. Functionally, is involved in a saturation metabolic pathway of polyunsaturated fatty acids, that detoxifies unsaturated fatty acids and generates hydroxy fatty acids, oxo fatty acids, conjugated fatty acids such as conjugated linoleic acids (CLAs), and partially saturated trans-fatty acids as intermediates. CLA-ER catalyzes the saturation of the carbon-carbon double bond in 10-oxo-(11E)-octadecenoate to produce 10-oxooctadecanoate, during linoleate metabolism. As part of the gut microbiome, this enzyme modifies host fatty acid composition and is expected to improve human health by altering lipid metabolism related to the onset of metabolic syndrome. The polypeptide is CLA biosynthesis enone reductase (Lactiplantibacillus plantarum (Lactobacillus plantarum)).